The chain runs to 404 residues: Glucoside xylosyltransferase 1 (404 aa).

Residues M1–R6 lie on the Cytoplasmic side of the membrane. The chain crosses the membrane as a helical; Signal-anchor for type II membrane protein span at residues V7–S29. The Lumenal segment spans residues L30 to R404. N201 carries N-linked (GlcNAc...) asparagine glycosylation.

Belongs to the glycosyltransferase 8 family.

The protein resides in the membrane. The enzyme catalyses 3-O-(beta-D-glucosyl)-L-seryl-[EGF-like domain protein] + UDP-alpha-D-xylose = 3-O-[alpha-D-xylosyl-(1-&gt;3)-beta-D-glucosyl]-L-seryl-[EGF-like domain protein] + UDP + H(+). Glycosyltransferase which elongates the O-linked glucose attached to EGF-like repeats in the extracellular domain of Notch proteins by catalyzing the addition of xylose. The protein is Glucoside xylosyltransferase 1 (Gxylt1) of Mus musculus (Mouse).